We begin with the raw amino-acid sequence, 313 residues long: Homoserine O-succinyltransferase (313 aa).

C142 serves as the catalytic Acyl-thioester intermediate. Residues K163 and S192 each coordinate substrate. H235 (proton acceptor) is an active-site residue. E237 is a catalytic residue. R249 is a binding site for substrate.

It belongs to the MetA family.

The protein localises to the cytoplasm. It carries out the reaction L-homoserine + succinyl-CoA = O-succinyl-L-homoserine + CoA. It participates in amino-acid biosynthesis; L-methionine biosynthesis via de novo pathway; O-succinyl-L-homoserine from L-homoserine: step 1/1. Functionally, transfers a succinyl group from succinyl-CoA to L-homoserine, forming succinyl-L-homoserine. This is Homoserine O-succinyltransferase from Vibrio parahaemolyticus serotype O3:K6 (strain RIMD 2210633).